A 1311-amino-acid chain; its full sequence is Cyclin-G-associated kinase (1311 aa).

Residue Ser2 is modified to N-acetylserine. A phosphoserine mark is found at Ser2 and Ser16. Residues 40-314 enclose the Protein kinase domain; that stretch reads LRVRRVLAEG…SIAEVVHQLQ (275 aa). Asp173 functions as the Proton acceptor in the catalytic mechanism. The Phosphatase tensin-type domain occupies 399-566; that stretch reads SVANYAKGDL…EYMCDMVAEE (168 aa). Ser456 is modified (phosphoserine). One can recognise a C2 tensin-type domain in the interval 572 to 710; that stretch reads SKPILVRAVV…FQVNLEVEVE (139 aa). Disordered stretches follow at residues 709–729 and 749–788; these read VEPR…SMRG and FGKP…SADA. Ser770 bears the Phosphoserine mark. The span at 770–788 shows a compositional bias: low complexity; sequence SPEAEPTDSDSPPSSSADA. The residue at position 776 (Thr776) is a Phosphothreonine. Ser783 bears the Phosphoserine mark. Position 794 is a phosphothreonine (Thr794). Disordered stretches follow at residues 801-860, 913-1035, and 1047-1150; these read KEAE…VQQD, CLLG…DLLG, and AVAP…PNYA. 5 positions are modified to phosphoserine: Ser811, Ser826, Ser829, Ser834, and Ser939. Composition is skewed to low complexity over residues 925–939 and 950–966; these read PPED…LLAS and PRGG…PLLP. Composition is skewed to polar residues over residues 967–976 and 1070–1080; these read SSGNNSQPCS and SQASWTKSQNP. Ser1096 bears the Phosphoserine mark. Residues 1109–1124 show a composition bias toward polar residues; that stretch reads TATTPKGSSSWQTSRP. Arg1123 carries the omega-N-methylarginine modification. Ser1176 and Ser1185 each carry phosphoserine. Residues 1247 to 1311 form the J domain; it reads SRWTPVGMAD…FENQGSRPLF (65 aa).

Belongs to the protein kinase superfamily. Ser/Thr protein kinase family. Ubiquitous. Highest in testis.

Its subcellular location is the cytoplasm. The protein localises to the perinuclear region. It is found in the golgi apparatus. The protein resides in the trans-Golgi network. It localises to the cell junction. Its subcellular location is the focal adhesion. The protein localises to the cytoplasmic vesicle. It is found in the clathrin-coated vesicle. It carries out the reaction L-seryl-[protein] + ATP = O-phospho-L-seryl-[protein] + ADP + H(+). It catalyses the reaction L-threonyl-[protein] + ATP = O-phospho-L-threonyl-[protein] + ADP + H(+). Its function is as follows. Associates with cyclin G and CDK5. Seems to act as an auxilin homolog that is involved in the uncoating of clathrin-coated vesicles by Hsc70 in non-neuronal cells. Expression oscillates slightly during the cell cycle, peaking at G1. May play a role in clathrin-mediated endocytosis and intracellular trafficking, and in the dynamics of clathrin assembly/disassembly. The protein is Cyclin-G-associated kinase of Homo sapiens (Human).